The following is a 420-amino-acid chain: Phytoene synthase 1, chloroplastic (420 aa).

The transit peptide at M1–Y70 directs the protein to the chloroplast.

This sequence belongs to the phytoene/squalene synthase family. In terms of tissue distribution, expressed in leaves. Highly expressed in developing leaves. Expressed at low levels in roots.

Its subcellular location is the plastid. The protein localises to the chloroplast membrane. It is found in the chloroplast. It localises to the plastoglobule. The catalysed reaction is 2 (2E,6E,10E)-geranylgeranyl diphosphate = 15-cis-phytoene + 2 diphosphate. In terms of biological role, catalyzes the conversion of geranylgeranyl diphosphate to phytoene. Mediates the first committed step in carotenoid biosynthesis. This chain is Phytoene synthase 1, chloroplastic, found in Oryza sativa subsp. japonica (Rice).